Reading from the N-terminus, the 3459-residue chain is uncharacterized protein (3459 aa).

Residues 158 to 167 (NDDDWIFNED) show a composition bias toward acidic residues. 2 disordered regions span residues 158–230 (NDDD…NNNN) and 400–447 (YGYI…NDEK). Residues 168–184 (DEKKNKNNDGNDNRYDY) show a composition bias toward basic and acidic residues. Low complexity predominate over residues 185–201 (NDLQNNNNNDNNKYDYN). The span at 204–221 (DDEKKNKNNDGDDNKYDY) shows a compositional bias: basic and acidic residues. The span at 406–443 (DNDDGDDYNDDNDNDDNYNDDNYNDDNYNDDNYNDDNY) shows a compositional bias: acidic residues. Residues 771 to 851 (VNEKKKGENE…NEMNKDEENE (81 aa)) are a coiled coil. A helical transmembrane segment spans residues 1059-1079 (LIYMIYLFFTYKKYDLLLMFI). 3 disordered regions span residues 1148 to 1187 (RRQEKVLNNKDNNDKNDKNDKNDKNDKNDKNEKNEKNDYD), 1399 to 1467 (IPTQ…NDDD), and 1711 to 1733 (QKKKGNNQKQNHNYNDDINNKEN). The segment covering 1404–1463 (DKNETDEGNKNETDEGDKNETDEGDKNETDEGNKNETEEIYKNETDEGNKNETEEIYKND) has biased composition (basic and acidic residues). 2 helical membrane-spanning segments follow: residues 2059-2079 (FLLFQMSLSNCFYIMNNIFFF) and 2197-2217 (IIQCTTYMFLLFFIFSTDFLF). Disordered regions lie at residues 2582 to 2644 (IYKD…DNNN) and 2776 to 2835 (GRIW…DKGD). A compositionally biased stretch (acidic residues) spans 2592–2629 (DNNDDDNINDDDNINDDDNINDDDNNNDDDNNNDDNND). Positions 2779-2821 (WKREENGEKKKNEKNESEKNERNEKNEKNEKHEKHEKHEKNEK) are enriched in basic and acidic residues. The stretch at 2785–2820 (GEKKKNEKNESEKNERNEKNEKNEKHEKHEKHEKNE) forms a coiled coil. The next 2 helical transmembrane spans lie at 3229–3249 (LFIIKEYNNIFLYIYMLSFIL) and 3296–3316 (LLFFFNYIFEQIILFVININS).

It localises to the membrane. This is an uncharacterized protein from Plasmodium falciparum (isolate 3D7).